Here is a 273-residue protein sequence, read N- to C-terminus: MSLSNAPLGQHVAYPSQYDPGLLFPIPRATNRASLQLGATLPFTGVDLWNAYELSWLDARGKPRVAMATFSFPADSPNIVESKSFKLYLNSFNQTRLPNAQALRDRLERDLAAAAGAPVGLKFISPQRFGELNMAELDGIYIDKLDIEIDTYEPAPQLLQCAPGDEVEETLATRLLKSNCPVTGQPDWASLQVRYRGRPIDRAALLKYVVSFRQHAEFHEHCVERIFGDIMRACQPRQLTVYARYTRRGGLDINPWRSNFESAPPADVRTARQ.

A substrate-binding site is contributed by 80-82; that stretch reads VES. An NADPH-binding site is contributed by 82–83; sequence SK. Residue cysteine 180 is the Thioimide intermediate of the active site. The active-site Proton donor is aspartate 187. Residue 219–220 participates in substrate binding; the sequence is HE. 248–249 provides a ligand contact to NADPH; that stretch reads RG.

Belongs to the GTP cyclohydrolase I family. QueF type 2 subfamily. As to quaternary structure, homodimer.

The protein resides in the cytoplasm. It catalyses the reaction 7-aminomethyl-7-carbaguanine + 2 NADP(+) = 7-cyano-7-deazaguanine + 2 NADPH + 3 H(+). Its pathway is tRNA modification; tRNA-queuosine biosynthesis. In terms of biological role, catalyzes the NADPH-dependent reduction of 7-cyano-7-deazaguanine (preQ0) to 7-aminomethyl-7-deazaguanine (preQ1). In Bordetella parapertussis (strain 12822 / ATCC BAA-587 / NCTC 13253), this protein is NADPH-dependent 7-cyano-7-deazaguanine reductase.